The primary structure comprises 277 residues: Diaminopimelate epimerase (277 aa).

3 residues coordinate substrate: Asn13, Gln46, and Asn66. Cys75 serves as the catalytic Proton donor. Substrate-binding positions include 76 to 77 (GN), Asn160, Asn193, and 211 to 212 (ER). Cys220 serves as the catalytic Proton acceptor. 221 to 222 (GS) is a binding site for substrate.

Belongs to the diaminopimelate epimerase family. In terms of assembly, homodimer.

Its subcellular location is the cytoplasm. The enzyme catalyses (2S,6S)-2,6-diaminopimelate = meso-2,6-diaminopimelate. It functions in the pathway amino-acid biosynthesis; L-lysine biosynthesis via DAP pathway; DL-2,6-diaminopimelate from LL-2,6-diaminopimelate: step 1/1. Functionally, catalyzes the stereoinversion of LL-2,6-diaminopimelate (L,L-DAP) to meso-diaminopimelate (meso-DAP), a precursor of L-lysine and an essential component of the bacterial peptidoglycan. The protein is Diaminopimelate epimerase of Legionella pneumophila (strain Lens).